Consider the following 371-residue polypeptide: Putative glutamate--cysteine ligase 2 (371 aa).

The protein belongs to the glutamate--cysteine ligase type 2 family. YbdK subfamily.

The catalysed reaction is L-cysteine + L-glutamate + ATP = gamma-L-glutamyl-L-cysteine + ADP + phosphate + H(+). Functionally, ATP-dependent carboxylate-amine ligase which exhibits weak glutamate--cysteine ligase activity. In Burkholderia multivorans (strain ATCC 17616 / 249), this protein is Putative glutamate--cysteine ligase 2.